The primary structure comprises 124 residues: Protein CYSTEINE-RICH TRANSMEMBRANE MODULE 10 (124 aa).

Residues 1–103 (MSYQDPQHPV…PKNKKDKKDS (103 aa)) are disordered. Composition is skewed to pro residues over residues 27-40 (AGYPPPAGYPPPQY) and 65-88 (GYPPPQYPQGHPPQYPYQGPPPPH). A helical membrane pass occupies residues 101-118 (KDSGGFMEGCLAMLCCCV).

This sequence belongs to the CYSTM1 family. As to quaternary structure, heterodimers. Interacts with CYSTM7 and WIH1/CYSTM13. Mostly expressed in stems and,at low levels, in stems, roots, flowers, siliques and leaves.

Its subcellular location is the cell membrane. The protein resides in the cytoplasm. Its function is as follows. Involved in resistance to abiotic stress. This chain is Protein CYSTEINE-RICH TRANSMEMBRANE MODULE 10, found in Arabidopsis thaliana (Mouse-ear cress).